The sequence spans 245 residues: Ribosomal RNA small subunit methyltransferase G (245 aa).

S-adenosyl-L-methionine contacts are provided by residues G90, L95, 140–141 (AE), and R158.

The protein belongs to the methyltransferase superfamily. RNA methyltransferase RsmG family.

The protein localises to the cytoplasm. In terms of biological role, specifically methylates the N7 position of guanine in position 518 of 16S rRNA. The polypeptide is Ribosomal RNA small subunit methyltransferase G (Mycobacterium leprae (strain TN)).